The following is a 411-amino-acid chain: Multidrug resistance protein MdtG (411 aa).

10 consecutive transmembrane segments (helical) span residues 14–34 (LFVA…IMPF), 56–76 (LVFS…GGLA), 89–109 (ALGM…WQFL), 113–133 (AVLG…ATQV), 144–164 (TLST…GLLA), 171–191 (PVFY…LLYV), 219–239 (ILSL…IAPI), 254–274 (LAFV…MSAP), 288–308 (ILVF…FVQT), and 376–396 (AVFC…WWCL).

This sequence belongs to the major facilitator superfamily. DHA1 family. MdtG (TC 2.A.1.2.20) subfamily.

The protein localises to the cell inner membrane. This chain is Multidrug resistance protein MdtG, found in Serratia proteamaculans (strain 568).